Reading from the N-terminus, the 72-residue chain is Large ribosomal subunit protein bL31c (72 aa).

It belongs to the bacterial ribosomal protein bL31 family. Type A subfamily. In terms of assembly, part of the 50S ribosomal subunit.

Its subcellular location is the plastid. It localises to the chloroplast. Binds the 23S rRNA. The polypeptide is Large ribosomal subunit protein bL31c (Trieres chinensis (Marine centric diatom)).